We begin with the raw amino-acid sequence, 208 residues long: MTHFLYLTPEILLPFSPLTSTEFELIRRKAQQLWQDETRWSASSMTTYSGSYREKQLDEATCNRLAQRVGQPQFEYKPTPLPGSSAYNTLPGHAGSQEAADGKGRLPDIASPSRDSPLNIKHKVAHQIWGSEVPCPTFLAYRGLRMSPCMQPKKPGFELLMSYRNRGKALLKRLQRQWDYESKLGSSEDSGTDRFSSNTSGSSGRKFK.

Disordered regions lie at residues 74-117 (FEYK…RDSP) and 181-208 (ESKLGSSEDSGTDRFSSNTSGSSGRKFK). A compositionally biased stretch (polar residues) spans 184–208 (LGSSEDSGTDRFSSNTSGSSGRKFK).

This is an uncharacterized protein from Mus musculus (Mouse).